The primary structure comprises 307 residues: Ribosomal RNA small subunit methyltransferase H (307 aa).

S-adenosyl-L-methionine-binding positions include 32–34 (GGH), Asp52, Phe78, Asp100, and Gln107.

It belongs to the methyltransferase superfamily. RsmH family.

It localises to the cytoplasm. It carries out the reaction cytidine(1402) in 16S rRNA + S-adenosyl-L-methionine = N(4)-methylcytidine(1402) in 16S rRNA + S-adenosyl-L-homocysteine + H(+). Functionally, specifically methylates the N4 position of cytidine in position 1402 (C1402) of 16S rRNA. This chain is Ribosomal RNA small subunit methyltransferase H, found in Coxiella burnetii (strain Dugway 5J108-111).